A 325-amino-acid polypeptide reads, in one-letter code: Tetraacyldisaccharide 4'-kinase (325 aa).

An ATP-binding site is contributed by 55 to 62 (TAGGNGKT).

This sequence belongs to the LpxK family.

It catalyses the reaction a lipid A disaccharide + ATP = a lipid IVA + ADP + H(+). It functions in the pathway glycolipid biosynthesis; lipid IV(A) biosynthesis; lipid IV(A) from (3R)-3-hydroxytetradecanoyl-[acyl-carrier-protein] and UDP-N-acetyl-alpha-D-glucosamine: step 6/6. Its function is as follows. Transfers the gamma-phosphate of ATP to the 4'-position of a tetraacyldisaccharide 1-phosphate intermediate (termed DS-1-P) to form tetraacyldisaccharide 1,4'-bis-phosphate (lipid IVA). This chain is Tetraacyldisaccharide 4'-kinase, found in Salmonella paratyphi C (strain RKS4594).